The sequence spans 138 residues: Phosphoribosyl-AMP cyclohydrolase (138 aa).

The segment at Met-1–Leu-23 is disordered. Asp-100 is a binding site for Mg(2+). Cys-101 serves as a coordination point for Zn(2+). Residues Asp-102 and Asp-104 each coordinate Mg(2+). 2 residues coordinate Zn(2+): Cys-117 and Cys-124.

Belongs to the PRA-CH family. Homodimer. Mg(2+) is required as a cofactor. It depends on Zn(2+) as a cofactor.

The protein localises to the cytoplasm. The catalysed reaction is 1-(5-phospho-beta-D-ribosyl)-5'-AMP + H2O = 1-(5-phospho-beta-D-ribosyl)-5-[(5-phospho-beta-D-ribosylamino)methylideneamino]imidazole-4-carboxamide. The protein operates within amino-acid biosynthesis; L-histidine biosynthesis; L-histidine from 5-phospho-alpha-D-ribose 1-diphosphate: step 3/9. In terms of biological role, catalyzes the hydrolysis of the adenine ring of phosphoribosyl-AMP. This is Phosphoribosyl-AMP cyclohydrolase from Paenarthrobacter aurescens (strain TC1).